We begin with the raw amino-acid sequence, 524 residues long: Leukotriene-B4 omega-hydroxylase 3 (524 aa).

Residues Glu328 and Cys468 each contribute to the heme site.

Belongs to the cytochrome P450 family. It depends on heme as a cofactor.

It localises to the endoplasmic reticulum membrane. Its subcellular location is the microsome membrane. The enzyme catalyses leukotriene B4 + reduced [NADPH--hemoprotein reductase] + O2 = 20-hydroxy-leukotriene B4 + oxidized [NADPH--hemoprotein reductase] + H2O + H(+). It functions in the pathway lipid metabolism; leukotriene B4 degradation. In terms of biological role, cytochromes P450 are a group of heme-thiolate monooxygenases. Catalyzes the omega-hydroxylation of LTB4. This chain is Leukotriene-B4 omega-hydroxylase 3 (Cyp4f14), found in Mus musculus (Mouse).